Here is a 407-residue protein sequence, read N- to C-terminus: Imidazolonepropionase (407 aa).

2 residues coordinate Fe(3+): histidine 68 and histidine 70. 2 residues coordinate Zn(2+): histidine 68 and histidine 70. Residues arginine 77, tyrosine 140, and histidine 173 each coordinate 4-imidazolone-5-propanoate. Tyrosine 140 contributes to the N-formimidoyl-L-glutamate binding site. Position 238 (histidine 238) interacts with Fe(3+). Histidine 238 lines the Zn(2+) pocket. Glutamine 241 contacts 4-imidazolone-5-propanoate. Residue aspartate 313 coordinates Fe(3+). Zn(2+) is bound at residue aspartate 313. Asparagine 315 and glycine 317 together coordinate N-formimidoyl-L-glutamate. Position 318 (threonine 318) interacts with 4-imidazolone-5-propanoate.

It belongs to the metallo-dependent hydrolases superfamily. HutI family. It depends on Zn(2+) as a cofactor. Requires Fe(3+) as cofactor.

It is found in the cytoplasm. It carries out the reaction 4-imidazolone-5-propanoate + H2O = N-formimidoyl-L-glutamate. Its pathway is amino-acid degradation; L-histidine degradation into L-glutamate; N-formimidoyl-L-glutamate from L-histidine: step 3/3. In terms of biological role, catalyzes the hydrolytic cleavage of the carbon-nitrogen bond in imidazolone-5-propanoate to yield N-formimidoyl-L-glutamate. It is the third step in the universal histidine degradation pathway. The polypeptide is Imidazolonepropionase (Burkholderia ambifaria (strain ATCC BAA-244 / DSM 16087 / CCUG 44356 / LMG 19182 / AMMD) (Burkholderia cepacia (strain AMMD))).